We begin with the raw amino-acid sequence, 454 residues long: DNA repair protein RadA (454 aa).

Residues 11–28 form a C4-type zinc finger; the sequence is CTECGTHSPKWLGQCSGC. 94 to 101 is a binding site for ATP; sequence GEPGIGKS. The short motif at 251-255 is the RadA KNRFG motif element; sequence KNRFG. The lon-protease-like stretch occupies residues 350–454; sequence DVFLSIAGGL…TIKDAVRLLQ (105 aa).

Belongs to the RecA family. RadA subfamily.

Functionally, DNA-dependent ATPase involved in processing of recombination intermediates, plays a role in repairing DNA breaks. Stimulates the branch migration of RecA-mediated strand transfer reactions, allowing the 3' invading strand to extend heteroduplex DNA faster. Binds ssDNA in the presence of ADP but not other nucleotides, has ATPase activity that is stimulated by ssDNA and various branched DNA structures, but inhibited by SSB. Does not have RecA's homology-searching function. The sequence is that of DNA repair protein RadA from Chlamydia trachomatis serovar D (strain ATCC VR-885 / DSM 19411 / UW-3/Cx).